Consider the following 297-residue polypeptide: MSLLEAIVLGLVQGLTEFLPISSTAHLRIAPELFGWRDPGAAYSAVIQLGTVAAVLIYFRKDIVSLVAAFFRGLARREPFGTLEARLAWFVLVGTLPVGIAGLTLKKFIENEFRSLYVISGSLIVLALILLVVEKRASHQRTLADMRWKDGILIGMWQALALIPGASRSGTTLTGGLSLGLKREDAARYSFLLSIPATTLAGVFELKHLLEAETRPSAMALWVGTLVAFASGMAAIAWLLRFLRTRTTLVFVVYRVALGVLLLVLLQTGKLSPMSGVENVEVPGEPGAPPVEKQITD.

Helical transmembrane passes span 39 to 59 (PGAA…LIYF), 85 to 105 (ARLA…GLTL), 113 to 133 (FRSL…LLVV), 151 to 171 (GILI…RSGT), 190 to 210 (SFLL…KHLL), 220 to 240 (ALWV…AWLL), and 249 to 269 (LVFV…LQTG).

It belongs to the UppP family.

It localises to the cell inner membrane. It carries out the reaction di-trans,octa-cis-undecaprenyl diphosphate + H2O = di-trans,octa-cis-undecaprenyl phosphate + phosphate + H(+). Functionally, catalyzes the dephosphorylation of undecaprenyl diphosphate (UPP). Confers resistance to bacitracin. The protein is Undecaprenyl-diphosphatase of Myxococcus xanthus (strain DK1622).